The chain runs to 496 residues: MIWWFIVGASFFFAFILIAKDTRTTKKNLPPGPPRLPIIGNLHQLGSKPQRSLFKLSEKYGSLMSLKFGNVSAVVASTPETVKDVLKTFDAECCSRPYMTYPARVTYNFNDLAFSPYSKYWREVRKMTVIELYTAKRVKSFQNVRQEEVASFVDFIKQHASLEKTVNMKQKLVKLSGSVICKVGFGISLEWSKLANTYEEVIQGTMEVVGRFAAADYFPIIGRIIDRITGLHSKCEKVFKEMDSFFDQSIKHHLEDTNIKDDIIGLLLKMEKGETGLGEFQLTRNHTKGILLNVLIAGVDTSGHTVTWVMTHLIKNPRVMKKAQAEVREVIKNKDDITEEDIERLEYLKMVIKETLRINPLVPLLIPREASKYIKIGGYDIPKKTWIYVNIWAVQRNPNVWKDPEVFIPERFMHSEIDYKGVDFELLPFGSGRRMCPGMGLGMALVHLTLINLLYRFDWKLPEGMNIEDVDLEESYGLVCPKKVPLQLIPVLTQWT.

A helical membrane pass occupies residues M1–D21. Residue C436 participates in heme binding.

The protein belongs to the cytochrome P450 family. The cofactor is heme.

It localises to the membrane. The sequence is that of Cytochrome P450 71B14 (CYP71B14) from Arabidopsis thaliana (Mouse-ear cress).